The primary structure comprises 396 residues: Protein GTS1 (396 aa).

The Arf-GAP domain maps to 14 to 141; sequence DRELKELINS…FRYDEIKPED (128 aa). The C4-type zinc-finger motif lies at 30–53; that stretch reads CGECGNFYPTWCSVNLGVFLCGRC. The span at 148–161 shows a compositional bias: basic and acidic residues; that stretch reads DFDGESDRFDERNR. Disordered regions lie at residues 148 to 194 and 233 to 266; these read DFDG…SGSR and KSSS…QPAI. S153 carries the phosphoserine modification. Y181 is subject to Phosphotyrosine. 2 positions are modified to phosphoserine: S184 and S187. The region spanning 193–234 is the UBA domain; that stretch reads SRYSRQLAELKDMGFGDTNKNLDALSSAHGNINRAIDYLEKS. Residues 234–249 show a composition bias toward low complexity; it reads SSSSRNSVSAAATTST. Residue S240 is modified to Phosphoserine. T249 carries the post-translational modification Phosphothreonine.

The protein localises to the nucleus. In terms of biological role, appears to modulate the timing of budding to obtain an appropriate cell size independent of the DNA replication cycle. Transcription factor involved in both heat resistance and flocculation. This chain is Protein GTS1 (GTS1), found in Saccharomyces cerevisiae (strain ATCC 204508 / S288c) (Baker's yeast).